Consider the following 30-residue polypeptide: Trypsin inhibitor 3 (30 aa).

3 disulfides stabilise this stretch: cysteine 4-cysteine 21, cysteine 11-cysteine 23, and cysteine 17-cysteine 29.

It belongs to the protease inhibitor I7 (squash-type serine protease inhibitor) family.

Its subcellular location is the secreted. Functionally, inhibits trypsin. This chain is Trypsin inhibitor 3, found in Momordica charantia (Bitter gourd).